The sequence spans 202 residues: 3-isopropylmalate dehydratase small subunit (202 aa).

It belongs to the LeuD family. LeuD type 1 subfamily. As to quaternary structure, heterodimer of LeuC and LeuD.

It catalyses the reaction (2R,3S)-3-isopropylmalate = (2S)-2-isopropylmalate. Its pathway is amino-acid biosynthesis; L-leucine biosynthesis; L-leucine from 3-methyl-2-oxobutanoate: step 2/4. Its function is as follows. Catalyzes the isomerization between 2-isopropylmalate and 3-isopropylmalate, via the formation of 2-isopropylmaleate. This Nocardioides sp. (strain ATCC BAA-499 / JS614) protein is 3-isopropylmalate dehydratase small subunit.